We begin with the raw amino-acid sequence, 701 residues long: DC-STAMP domain-containing protein 2 (701 aa).

Transmembrane regions (helical) follow at residues 15–35 (TCGFTVGLSLATAFGLLELLG), 40–60 (PFGCLVTTVTLAAFLSLGMGF), 82–102 (LLLLVASFGLVLQGPCANTLQ), and 215–235 (FPHLCYALLPYKLLVCGLASL). 2 N-linked (GlcNAc...) asparagine glycosylation sites follow: Asn272 and Asn284. 2 helical membrane-spanning segments follow: residues 310–330 (ALSLMGYTMPLLIGFLYIQAL) and 404–424 (LLIMLLLVFLDYGVFWLLDLA). Residue Asn468 is glycosylated (N-linked (GlcNAc...) asparagine). Residues 488-508 (YIVIGTMYGLCFFVTLFGSYV) form a helical membrane-spanning segment. The segment at 673 to 701 (LQEALGTNLSDKSTSKPERAGNRNQDRKQ) is disordered. Over residues 685-701 (STSKPERAGNRNQDRKQ) the composition is skewed to basic and acidic residues.

As to quaternary structure, interacts with DCST1. As to expression, expressed in testis.

The protein localises to the cytoplasmic vesicle. It localises to the secretory vesicle. The protein resides in the acrosome membrane. Functionally, essential sperm cell-surface protein required for sperm-egg fusion and fertilization. This Mus musculus (Mouse) protein is DC-STAMP domain-containing protein 2.